Consider the following 160-residue polypeptide: Small ribosomal subunit protein uS9 (160 aa).

Belongs to the universal ribosomal protein uS9 family.

The protein is Small ribosomal subunit protein uS9 of Cereibacter sphaeroides (strain ATCC 17029 / ATH 2.4.9) (Rhodobacter sphaeroides).